We begin with the raw amino-acid sequence, 177 residues long: Putative peroxiredoxin (177 aa).

Positions 8–177 constitute a Thioredoxin domain; it reads TAKGNEIPDT…ASIDTILTKV (170 aa). The active-site Cysteine sulfenic acid (-SOH) intermediate is Cys-64. Residues 175 to 177 carry the Microbody targeting signal motif; the sequence is TKV.

The protein belongs to the peroxiredoxin family. Prx5 subfamily. As to quaternary structure, homodimer; disulfide-linked, upon oxidation.

The enzyme catalyses a hydroperoxide + [thioredoxin]-dithiol = an alcohol + [thioredoxin]-disulfide + H2O. Its function is as follows. Thiol-specific peroxidase that catalyzes the reduction of hydrogen peroxide and organic hydroperoxides to water and alcohols, respectively. Plays a role in cell protection against oxidative stress by detoxifying peroxides and as sensor of hydrogen peroxide-mediated signaling events. The chain is Putative peroxiredoxin from Malassezia furfur (Pityriasis versicolor infection agent).